A 115-amino-acid chain; its full sequence is Large ribosomal subunit protein uL22 (115 aa).

This sequence belongs to the universal ribosomal protein uL22 family. Part of the 50S ribosomal subunit.

This protein binds specifically to 23S rRNA; its binding is stimulated by other ribosomal proteins, e.g. L4, L17, and L20. It is important during the early stages of 50S assembly. It makes multiple contacts with different domains of the 23S rRNA in the assembled 50S subunit and ribosome. Functionally, the globular domain of the protein is located near the polypeptide exit tunnel on the outside of the subunit, while an extended beta-hairpin is found that lines the wall of the exit tunnel in the center of the 70S ribosome. This is Large ribosomal subunit protein uL22 (rplV) from Wolbachia pipientis wMel.